The following is a 318-amino-acid chain: sn-1 stearoyl-lipid 9-desaturase (318 aa).

2 consecutive transmembrane segments (helical) span residues 56 to 76 (VIFFFTSIHLVALLAFLPQFF) and 80 to 100 (AVGMAFLLYVITGGIGITLGF). The short motif at 101–106 (HRCISH) is the Histidine box-1 element. Residues 117–137 (YIFVICGTLACQGGVFEWVGL) traverse the membrane as a helical segment. Residues 138-142 (HRMHH) carry the Histidine box-2 motif. The helical transmembrane segment at 201-221 (VALGLILFALGGWPFVIWGIF) threads the bilayer. Positions 271–275 (HHAYQ) match the Histidine box-3 motif.

Belongs to the fatty acid desaturase type 2 family. Fe(2+) serves as cofactor.

Its subcellular location is the cellular thylakoid membrane. It catalyses the reaction a 1-octadecanoyl 2-acyl-glycerolipid + 2 reduced [2Fe-2S]-[ferredoxin] + O2 + 2 H(+) = a 1-[(9Z)-octadecenoyl]-2-acyl-glycerolipid + 2 oxidized [2Fe-2S]-[ferredoxin] + 2 H2O. Its pathway is lipid metabolism; polyunsaturated fatty acid biosynthesis. In terms of biological role, desaturase involved in fatty acid biosynthesis. Introduces a double bond at carbon 9 of stearoyl groups (18:0) attached to the sn-1 position of the glycerol moiety of membrane glycerolipids. Does not desaturate palmitic acid (16:0), palmitoleic acid (16:1) and cis-vaccenic acid (18:1). This Synechocystis sp. (strain ATCC 27184 / PCC 6803 / Kazusa) protein is sn-1 stearoyl-lipid 9-desaturase.